Here is a 303-residue protein sequence, read N- to C-terminus: Vesicle-trafficking protein SEC22c (303 aa).

The Cytoplasmic segment spans residues 1 to 183; that stretch reads MSVIFFACVV…EPAPNFRMEP (183 aa). Positions 8 to 119 constitute a Longin domain; the sequence is CVVRVRDGLP…YAFLEFDSII (112 aa). The chain crosses the membrane as a helical span at residues 184 to 204; it reads VTALGILSLILNIMCAALNLI. The Lumenal portion of the chain corresponds to 205-223; that stretch reads RGVHLAEHSLQVAHEEIGN. The chain crosses the membrane as a helical span at residues 224–244; the sequence is ILAFLVPFVACIFQCYLYLFY. Topologically, residues 245–248 are cytoplasmic; that stretch reads SPAR. A helical transmembrane segment spans residues 249–269; it reads TMKVVLMLLFICLGNMYLHGL. Residue Arg-270 is a topological domain, lumenal. Residues 271 to 291 traverse the membrane as a helical segment; it reads NLWQILFHIGVAFLSSYQILT. Residues 292 to 303 are Cytoplasmic-facing; it reads RQLQEKQSDCGV.

The protein belongs to the synaptobrevin family. As to expression, ubiquitously expressed.

The protein resides in the endoplasmic reticulum membrane. Its function is as follows. May be involved in vesicle transport between the ER and the Golgi complex. The protein is Vesicle-trafficking protein SEC22c (SEC22C) of Homo sapiens (Human).